The sequence spans 688 residues: MPRKFPLEKTRNIGIMAHIDAGKTTTTERILFHTGKIHKIGETHDGDSQMDWMKQEQERGITITSAATTAFWKEHRINIIDTPGHVDFTVEVSRSLRVLDGAVAVIDAKAGVEPQTETVWRQATEYKVPRIIFVNKMDKIGASFDYAVKTLYQRLGINASPIQLPIGSENEFKGIVDLLEMTGVEFLGTSDEKFKTIEIPEYMKELAQNKRIELIEKMANYDEELMMDYLNGKEITVEKLKNVIRQATLKADFFPVLCGSAFKNKGVKKILDAIIDYLPSPMDVSSIVGCNFENKEIIRKTSDNEPFTALAFKVMTDPYVGKLTFFRVYAGTIKTGSYVTNATKQVKERLGRLLQMHANSREEIKEVYAGDIVAAVGLKNTTTGDTLTSINDDIILESMNFPEPVIEIAIEPKTKADQDKIGIALSKLSEEDPTFKIYTNRETGQTIIAGMGELHLEIILDRLKTEFKVEANVNQPQVAYRETLTKISTTEGKFIRQSGGRGQYGHVIIRFEPNSDKGNEFINKIVGGVIPKEYIPAVKKGLEESLSNGILAGFPLIDVKATLIDGSYHDVDSSEIAFKIAASMALKQTKNEGNLVILEPIMEVEIITPNDYIGNVIGDLTSRRGKLENQDSRENTVIIKALVPLSEMFGYATILRSNTQGRASFIMQFLKYERAPKNIAEEIIKKRN.

In terms of domain architecture, tr-type G spans 8-282; it reads EKTRNIGIMA…AIIDYLPSPM (275 aa). GTP is bound by residues 17 to 24, 81 to 85, and 135 to 138; these read AHIDAGKT, DTPGH, and NKMD.

It belongs to the TRAFAC class translation factor GTPase superfamily. Classic translation factor GTPase family. EF-G/EF-2 subfamily.

The protein resides in the cytoplasm. Its function is as follows. Catalyzes the GTP-dependent ribosomal translocation step during translation elongation. During this step, the ribosome changes from the pre-translocational (PRE) to the post-translocational (POST) state as the newly formed A-site-bound peptidyl-tRNA and P-site-bound deacylated tRNA move to the P and E sites, respectively. Catalyzes the coordinated movement of the two tRNA molecules, the mRNA and conformational changes in the ribosome. The protein is Elongation factor G of Phytoplasma mali (strain AT).